A 261-amino-acid chain; its full sequence is Triosephosphate isomerase (261 aa).

Substrate is bound at residue 10–12 (NWK). H100 serves as the catalytic Electrophile. The active-site Proton acceptor is E172. Substrate is bound by residues G178, S218, and 239 to 240 (GG).

Belongs to the triosephosphate isomerase family. In terms of assembly, homodimer.

It localises to the cytoplasm. The enzyme catalyses D-glyceraldehyde 3-phosphate = dihydroxyacetone phosphate. It functions in the pathway carbohydrate biosynthesis; gluconeogenesis. The protein operates within carbohydrate degradation; glycolysis; D-glyceraldehyde 3-phosphate from glycerone phosphate: step 1/1. Functionally, involved in the gluconeogenesis. Catalyzes stereospecifically the conversion of dihydroxyacetone phosphate (DHAP) to D-glyceraldehyde-3-phosphate (G3P). This Mycobacterium bovis (strain BCG / Pasteur 1173P2) protein is Triosephosphate isomerase.